A 273-amino-acid polypeptide reads, in one-letter code: GTP cyclohydrolase MptA (273 aa).

It belongs to the GTP cyclohydrolase IV family. Homodimer. The cofactor is Fe(2+).

The catalysed reaction is GTP + H2O = 7,8-dihydroneopterin 2',3'-cyclic phosphate + formate + diphosphate + H(+). It functions in the pathway cofactor biosynthesis; 5,6,7,8-tetrahydromethanopterin biosynthesis. In terms of biological role, converts GTP to 7,8-dihydro-D-neopterin 2',3'-cyclic phosphate, the first intermediate in the biosynthesis of coenzyme methanopterin. The polypeptide is GTP cyclohydrolase MptA (Picrophilus torridus (strain ATCC 700027 / DSM 9790 / JCM 10055 / NBRC 100828 / KAW 2/3)).